The sequence spans 342 residues: Phomopsin biosynthesis cluster protein B' (342 aa).

Residues 1-22 (MESIAKAKSLPNKGRTYDSQRP) are disordered. Residues 87–107 (VLIIGCAVISLFAIIGALGFA) form a helical membrane-spanning segment. The disordered stretch occupies residues 118–186 (CASPAHQNPH…QCGESPDEAQ (69 aa)). Residues 144 to 155 (HSGSHSSSSSTN) show a composition bias toward low complexity. N-linked (GlcNAc...) asparagine glycosylation occurs at Asn-248.

Its subcellular location is the membrane. Functionally, part of the gene cluster that mediates the biosynthesis of the phomopsins, a group of hexapeptide mycotoxins which infects lupins and causes lupinosis disease in livestock. The role of phomB' within the phomopsins biosynthesis pathway has still to be determined. The pathway starts with the processing of the precursor phomA by several endopeptidases including kexin proteases as well as the cluster-specific S41 family peptidase phomP1 and the oligopeptidase phomG to produce 10 identical copies of the hexapeptide Tyr-Val-Ile-Pro-Ile-Asp. After being excised from the precursor peptide, the core peptides are cyclized and modified post-translationally by enzymes encoded within the gene cluster. The timing and order of proteolysis of the phomA precursor and PTMs are still unknown. Two tyrosinase-like enzymes, phomQ1 and phomQ2, catalyze the chlorination and hydroxylation of Tyr, respectively. PhomYb, is proposed to be involved in the construction of the macrocyclic structure. The other 4 ustYa family proteins may be involved in PTMs that generate the unique structure of phomopsin A. PhomYa is required for the hydroxylation of C-beta of Tyr. PhomYc, phomYd, and phomYe are responsible for the biosynthesis of 2,3-dehydroisoleucine (dIle), 2,3-dehydroaspartic acid (dAsp), and 3,4-dehydroproline (dPro), respectively. While dIle formation by phomYc is indispensable for the installation of dAsp by phomYd, the order of the other PTMs have not been elucidated yet. Most of the biosynthetic enzymes likely have broad substrate specificity, and thus, there might be a metabolic grid from a precursor to phomopsin A. The enzyme(s) responsible for the biosynthesis of 3,4-dehydrovaline (dVal) have also not been identified yet. Finally, phomM acts as an S-adenosylmethionine-dependent alpha-N-methyltransferase that catalyzes two successive N-methylation reactions, converting N-desmethyl-phomopsin A to phomopsin A and phomopsin A further to an N,N-dimethylated congener called phomopsin E. This chain is Phomopsin biosynthesis cluster protein B', found in Diaporthe leptostromiformis (Lupinosis disease fungus).